A 351-amino-acid chain; its full sequence is Spindolin (351 aa).

A signal peptide spans 1-20 (MNKFYYICIYINILYVCVSG).

Homodimer; disulfide-linked.

In terms of biological role, this protein is a spindle body protein. This is Spindolin from Lepidoptera (butterflies and moths).